The following is a 274-amino-acid chain: Diaminopimelate epimerase (274 aa).

The substrate site is built by Asn-11, Gln-44, and Asn-64. The active-site Proton donor is Cys-73. Residues 74-75 (GN), Asn-157, Asn-190, and 208-209 (ER) each bind substrate. Residue Cys-217 is the Proton acceptor of the active site. Residue 218–219 (GS) participates in substrate binding.

This sequence belongs to the diaminopimelate epimerase family. As to quaternary structure, homodimer.

It localises to the cytoplasm. The enzyme catalyses (2S,6S)-2,6-diaminopimelate = meso-2,6-diaminopimelate. It participates in amino-acid biosynthesis; L-lysine biosynthesis via DAP pathway; DL-2,6-diaminopimelate from LL-2,6-diaminopimelate: step 1/1. Catalyzes the stereoinversion of LL-2,6-diaminopimelate (L,L-DAP) to meso-diaminopimelate (meso-DAP), a precursor of L-lysine and an essential component of the bacterial peptidoglycan. This Salmonella agona (strain SL483) protein is Diaminopimelate epimerase.